The following is a 481-amino-acid chain: Aspartyl/glutamyl-tRNA(Asn/Gln) amidotransferase subunit B (481 aa).

Belongs to the GatB/GatE family. GatB subfamily. As to quaternary structure, heterotrimer of A, B and C subunits.

The catalysed reaction is L-glutamyl-tRNA(Gln) + L-glutamine + ATP + H2O = L-glutaminyl-tRNA(Gln) + L-glutamate + ADP + phosphate + H(+). The enzyme catalyses L-aspartyl-tRNA(Asn) + L-glutamine + ATP + H2O = L-asparaginyl-tRNA(Asn) + L-glutamate + ADP + phosphate + 2 H(+). Its function is as follows. Allows the formation of correctly charged Asn-tRNA(Asn) or Gln-tRNA(Gln) through the transamidation of misacylated Asp-tRNA(Asn) or Glu-tRNA(Gln) in organisms which lack either or both of asparaginyl-tRNA or glutaminyl-tRNA synthetases. The reaction takes place in the presence of glutamine and ATP through an activated phospho-Asp-tRNA(Asn) or phospho-Glu-tRNA(Gln). This is Aspartyl/glutamyl-tRNA(Asn/Gln) amidotransferase subunit B from Prosthecochloris aestuarii (strain DSM 271 / SK 413).